The following is a 1119-amino-acid chain: MNNIYISLYIFFISYIIQLCFNTKYIYCDKKLYVSKNILPSVEKKEFVSNVPHKLEWLVHNILEVVHFLEDVNNYIVDFKKDILTKLEHIVQDDTELYESYEYNENLLNQIYLNNEKKLKRYSEYIEKLKDTKLQMFEDTINNFQRENIYYLNFVYKNLLAKIDLITNLNKKKLDKEKKKNVIELKEYLEDLKKRMFDMQKRLNDIIITKSTFLKNESELNMKLFETSAIDYVNNNSNFEVFSTYIINDFMLNKKRINVLNYDSNLFFKNNFMYFNFLHNYLKEKKDEHVLNVYIYLKDPLIQEYELNYFNYYVVLDLYILDVIIKNVDLLIEKKGKKRKNVNHILVCIDNYVVKYNVLSSNIYLDIQQDIKSFFHESNRNVDGSKIQDMLFHFERKNNSIYQNNMFHDKYYKKKIKKDIKEEKKQNDSLQKYNKNIDPLLFIRKKNIFFDSQKEYYKKFLSSYTYEEIVNILCNKSSRCNNRIFQLINDVNKNTFILKSHLALKNELKKFFQINQNKLLKNKTGVGLINSTKDDINRITNMNLATNTNNAMGNITNDSNIINTNNNNNTSDINNNNTSDINNNNTNNINNNNTNNINNNNTNNINNNTNNTNNNSNNNNNNNIFNNEDSLNKCSAYTYPFSNDAEKNYQENRNQSFSNSDHCFKLLNSIQGANKSSDFINMQNIDDYLNTYYVAYHESFKVVKKEHYYSVISHIFESYLNIDESSNDDDHPIHKKYPHLKGRNVSINFLGQLPEIMKVYKTFRYCDSLNVLAKSYIPKSPASVQSLDKGEDNNDNDEKGESGEDTQVIEKDDSGEDRQMIEKDDSGEDRQMIEKDDSGEDRQMIEKDDSGEDRQMIEKDDSGEDRQMIEKDDSGEDRQMIEKDKSRDDNKAQNNNSTDNEEHDEITEQIGFLKNHNQKYMRLFQKHLLEEIKFINFFEFLVQKKLGVILEKNEFLKLYIFYGQKNLPSMPYTPLFFTCRTIIKIEVLRDVNTNQIIYSSRSFFLETLITLKEYKIKNESAYIVIETTDESSTIKKRLKMDMLHKISPMSHINAYVISNKGKEIVYHKGNIYQRSASDIKNVISDIRNDFLNIILPQYHLFDLFDNYVYIIICLKNENC.

The first 21 residues, 1–21 (MNNIYISLYIFFISYIIQLCF), serve as a signal peptide directing secretion. A coiled-coil region spans residues 170-206 (NKKKLDKEKKKNVIELKEYLEDLKKRMFDMQKRLNDI). Disordered stretches follow at residues 606 to 627 (NNNT…IFNN) and 782 to 905 (ASVQ…EHDE). The span at 788–891 (DKGEDNNDND…EKDKSRDDNK (104 aa)) shows a compositional bias: basic and acidic residues. Residues 890-920 (NKAQNNNSTDNEEHDEITEQIGFLKNHNQKY) adopt a coiled-coil conformation.

This is an uncharacterized protein from Plasmodium falciparum (isolate 3D7).